The chain runs to 188 residues: Large ribosomal subunit protein uL6 (188 aa).

This sequence belongs to the universal ribosomal protein uL6 family. In terms of assembly, part of the 50S ribosomal subunit.

Functionally, this protein binds to the 23S rRNA, and is important in its secondary structure. It is located near the subunit interface in the base of the L7/L12 stalk, and near the tRNA binding site of the peptidyltransferase center. This Myxococcus xanthus (strain DK1622) protein is Large ribosomal subunit protein uL6.